Reading from the N-terminus, the 213-residue chain is Bcl-2-related ovarian killer protein (213 aa).

The short motif at lysine 32–isoleucine 44 is the BH4 element. The BH3 signature appears at valine 67 to proline 83. Residues glutamine 113–alanine 132 carry the BH1 motif. A BH2 motif is present at residues tryptophan 165–valine 179. A helical membrane pass occupies residues tryptophan 190–leucine 210.

The protein belongs to the Bcl-2 family.

Its subcellular location is the membrane. In terms of biological role, may play a role in apoptosis. The chain is Bcl-2-related ovarian killer protein from Gallus gallus (Chicken).